The sequence spans 1254 residues: Structural polyprotein (1254 aa).

Residues 1 to 33 (MFPFQPMYPMQPMPYRNPFAAPRRPWFPRTDPF) are necessary for nucleocapsid assembly and virus assembly. The segment at 33–68 (FLAMQVQELTRSMANLTFKQRRDAPPEGPSAKKPKK) is host transcription inhibition. The Supraphysiological nuclear export signal motif lies at 41–48 (LTRSMANL). A disordered region spans residues 45–119 (MANLTFKQRR…KKPGKRQRMV (75 aa)). The Nuclear localization signal motif lies at 64 to 68 (KKPKK). A compositionally biased stretch (basic residues) spans 80–92 (GKKKKNQGKKKAK). Residues 91–127 (AKTGPPNPKAQNGNKKKTNKKPGKRQRMVMKLESDKT) form a binding to the viral RNA region. Phosphothreonine occurs at positions 93 and 108. The segment covering 104-118 (NKKKTNKKPGKRQRM) has biased composition (basic residues). Residues 112 to 126 (PGKRQRMVMKLESDK) form a ribosome-binding region. Ser124 carries the phosphoserine modification. The Peptidase S3 domain occupies 126 to 275 (KTFPIMLEGK…KYTPENCEQW (150 aa)). Thr127 carries the post-translational modification Phosphothreonine. Active-site charge relay system residues include His152, Asp174, and Ser226. Positions 276 to 287 (SLVTTMCLLANV) are functions as an uncleaved signal peptide for the precursor of protein E3/E2. At 276–701 (SLVTTMCLLA…HYYHRYPMST (426 aa)) the chain is on the extracellular side. Asn286, Asn546, and Asn652 each carry an N-linked (GlcNAc...) asparagine; by host glycan. Residues 702–722 (ILGLSICAAIATVSVAASTWL) form a helical membrane-spanning segment. The Cytoplasmic segment spans residues 723 to 757 (FCRSRVACLTPYRLTPNARIPFCLAVLCCARTARA). Residues Cys730, Cys750, and Cys751 are each lipidated (S-palmitoyl cysteine; by host). Residues 758-772 (ETTWESLDHLWNNNQ) are Extracellular-facing. Residues 773–793 (QMFWIQLLIPLAALIVVTRLL) form a helical membrane-spanning segment. Topologically, residues 794–795 (RC) are cytoplasmic. Residues 796–816 (VCCVVPFLVMAGAAAPAYEHA) form a helical membrane-spanning segment. Residues 817–1224 (TTMPSQAGIS…SKTAWTWLTS (408 aa)) lie on the Extracellular side of the membrane. Disulfide bonds link Cys861–Cys926, Cys874–Cys906, Cys875–Cys908, and Cys880–Cys890. The tract at residues 896-913 (VYPFMWGGAYCFCDTENT) is E1 fusion peptide loop. Residue Asn946 is glycosylated (N-linked (GlcNAc...) asparagine; by host). 4 disulfides stabilise this stretch: Cys1071-Cys1083, Cys1113-Cys1188, Cys1118-Cys1192, and Cys1140-Cys1182. A helical membrane pass occupies residues 1225–1245 (LLGGSAVIIIIGLVLATIVAM). Residues 1246–1254 (YVLTNQKHN) are Cytoplasmic-facing.

In terms of assembly, homodimer. Homomultimer. Interacts with host karyopherin KPNA4; this interaction allows the nuclear import of the viral capsid protein. Interacts with spike glycoprotein E2. Interacts with host IRAK1; the interaction leads to inhibition of IRAK1-dependent signaling. Part of a tetrameric complex composed of host CRM1, host importin alpha/beta dimer and the viral capsid; this complex blocks the receptor-mediated transport through the nuclear pore. Interacts with host phosphatase PPP1CA; this interaction dephosphorylates the capsid protein, which increases its ability to bind to the viral genome. As to quaternary structure, the precursor of protein E3/E2 and E1 form a heterodimer shortly after synthesis. Interacts with spike glycoprotein E2. The precursor of protein E3/E2 and E1 form a heterodimer shortly after synthesis. Processing of the precursor of protein E3/E2 into E2 and E3 results in a heterodimer of the spike glycoproteins E2 and E1. Spike at virion surface are constituted of three E2-E1 heterodimers. After target cell attachment and endocytosis, E1 change conformation to form homotrimers. Interacts with 6K protein. Interacts (via fusion peptide loop) with host LDLRAD3 (via domain LDL-receptor class A 1); this interaction mediates viral entry to the host cell. 2 adjacent E2-E1 heterodimers in the trimeric spike interact with host LDLRAD3. In terms of assembly, interacts with spike glycoprotein E1. Processing of the precursor of protein E3/E2 into E2 and E3 results in a heterodimer of the spike glycoproteins E2 and E1. Spike at virion surface are constituted of a trimer of E2-E1 heterodimers. Interacts with 6K protein. Interacts with host LDLRAD3 (via domain LDL-receptor class A 1); this interaction mediates viral entry to the host cell. 2 adjacent E2-E1 heterodimers in the trimeric spike interact with host LDLRAD3. As to quaternary structure, oligomer. Interacts with spike glycoprotein E1. Interacts with spike glycoprotein E2. Structural polyprotein: Specific enzymatic cleavages in vivo yield mature proteins. Capsid protein is auto-cleaved during polyprotein translation, unmasking a signal peptide at the N-terminus of the precursor of E3/E2. The remaining polyprotein is then targeted to the host endoplasmic reticulum, where host signal peptidase cleaves it into pE2, 6K and E1 proteins. pE2 is further processed to mature E3 and E2 by host furin in trans-Golgi vesicle. In terms of processing, phosphorylated on serine and threonine residues. Post-translationally, palmitoylated via thioester bonds. These palmitoylations may induce disruption of the C-terminus transmembrane. This would result in the reorientation of E2 C-terminus from lumenal to cytoplasmic side. N-glycosylated. In terms of processing, palmitoylated via thioester bonds.

The protein localises to the virion. Its subcellular location is the host cytoplasm. It localises to the host cell membrane. The protein resides in the host nucleus. It is found in the virion membrane. It catalyses the reaction Autocatalytic release of the core protein from the N-terminus of the togavirus structural polyprotein by hydrolysis of a -Trp-|-Ser- bond.. Functionally, forms an icosahedral capsid with a T=4 symmetry composed of 240 copies of the capsid protein surrounded by a lipid membrane through which penetrate 80 spikes composed of trimers of E1-E2 heterodimers. The capsid protein binds to the viral RNA genome at a site adjacent to a ribosome binding site for viral genome translation following genome release. Possesses a protease activity that results in its autocatalytic cleavage from the nascent structural protein. Following its self-cleavage, the capsid protein transiently associates with ribosomes, and within several minutes the protein binds to viral RNA and rapidly assembles into icosahedric core particles. The resulting nucleocapsid eventually associates with the cytoplasmic domain of the spike glycoprotein E2 at the cell membrane, leading to budding and formation of mature virions. In case of infection, new virions attach to target cells and after clathrin-mediated endocytosis their membrane fuses with the host endosomal membrane. This leads to the release of the nucleocapsid into the cytoplasm, followed by an uncoating event necessary for the genomic RNA to become accessible. The uncoating might be triggered by the interaction of capsid proteins with ribosomes. Binding of ribosomes would release the genomic RNA since the same region is genomic RNA-binding and ribosome-binding. Specifically inhibits interleukin-1 receptor-associated kinase 1/IRAK1-dependent signaling during viral entry, representing a means by which the alphaviruses may evade innate immune detection and activation prior to viral gene expression. Inhibits host transcription. Forms a tetrameric complex with XPO1/CRM1 and the nuclear import receptor importin. This complex blocks the central channel of host nuclear pores thereby inhibiting the receptor-mediated nuclear transport and thus the host mRNA and rRNA transcription. The inhibition of transcription is linked to a cytopathic effect on the host cell. In terms of biological role, provides the signal sequence for the translocation of the precursor of protein E3/E2 to the host endoplasmic reticulum. Furin-cleaved E3 remains associated with spike glycoprotein E1 and mediates pH protection of the latter during the transport via the secretory pathway. After virion release from the host cell, the assembly protein E3 is gradually released in the extracellular space. Plays a role in viral attachment to target host cell, by binding to the cell receptor LDLRAD3. Synthesized as a p62 precursor which is processed by furin at the cell membrane just before virion budding, giving rise to E2-E1 heterodimer. The p62-E1 heterodimer is stable, whereas E2-E1 is unstable and dissociate at low pH. p62 is processed at the last step, presumably to avoid E1 fusion activation before its final export to cell surface. E2 C-terminus contains a transitory transmembrane that would be disrupted by palmitoylation, resulting in reorientation of the C-terminal tail from lumenal to cytoplasmic side. This step is critical since E2 C-terminus is involved in budding by interacting with capsid proteins. This release of E2 C-terminus in cytoplasm occurs lately in protein export, and precludes premature assembly of particles at the endoplasmic reticulum membrane. Its function is as follows. Acts as a viroporin that participates in virus glycoprotein processing and transport to the plasma membrane, cell permeabilization and budding of viral particles. Disrupts the calcium homeostasis of the cell, probably at the endoplasmic reticulum level. This leads to cytoplasmic calcium elevation. Because of its lipophilic properties, the 6K protein is postulated to influence the selection of lipids that interact with the transmembrane domains of the glycoproteins, which, in turn, affects the deformability of the bilayer required for the extreme curvature that occurs as budding proceeds. Present in low amount in virions, about 3% compared to viral glycoproteins. Functionally, class II viral fusion protein. Fusion activity is inactive as long as E1 is bound to E2 in mature virion. After virus attachment to cell receptor LDLRAD3 and endocytosis, acidification of the endosome induce dissociation of E1/E2 heterodimer and concomitant trimerization of the E1 subunits. This E1 trimer is fusion active, and promotes release of viral nucleocapsid in cytoplasm after endosome and viral membrane fusion. Efficient fusion requires the presence of cholesterol and sphingolipid in the target membrane. This Bos taurus (Bovine) protein is Structural polyprotein.